We begin with the raw amino-acid sequence, 175 residues long: Cytochrome c homolog (175 aa).

Residues 1 to 8 (MSGKELNK) lie on the Cytoplasmic side of the membrane. The helical; Signal-anchor transmembrane segment at 9-29 (IVAAILFASLIAMMVGFVANI) threads the bilayer. At 30–175 (LYKPTLELQH…LFLKTYVHDK (146 aa)) the chain is on the periplasmic side. Residues cysteine 84, cysteine 87, histidine 88, and methionine 150 each coordinate heme c.

This sequence belongs to the cytochrome c family. Post-translationally, binds 1 heme c group covalently per subunit.

The protein localises to the cell membrane. May be involved in electron transfer from bc1 complex to aa3. The protein is Cytochrome c homolog (cycM) of Rickettsia felis (strain ATCC VR-1525 / URRWXCal2) (Rickettsia azadi).